Reading from the N-terminus, the 336-residue chain is Fructose-1,6-bisphosphatase class 1 (336 aa).

E90, D112, L114, and D115 together coordinate Mg(2+). Substrate is bound by residues 115-118, N211, and K277; that span reads DGSS. E283 provides a ligand contact to Mg(2+).

The protein belongs to the FBPase class 1 family. In terms of assembly, homotetramer. Mg(2+) is required as a cofactor.

The protein localises to the cytoplasm. It carries out the reaction beta-D-fructose 1,6-bisphosphate + H2O = beta-D-fructose 6-phosphate + phosphate. It participates in carbohydrate biosynthesis; gluconeogenesis. This chain is Fructose-1,6-bisphosphatase class 1, found in Pseudomonas putida (strain W619).